A 181-amino-acid polypeptide reads, in one-letter code: Ankyrin repeat-containing protein YGL242C (181 aa).

Residue methionine 1 is modified to N-acetylmethionine. 2 ANK repeats span residues 49-78 (LGNTALHLCCKYGSWEVLDKILDQDGEIEI) and 85-120 (DGDTPLHVTVRYSQEEPEHGTFIARNLIEVGADPRV). The tract at residues 151-181 (IDSTNGSGDNNEDGEMIDDGPSDDDEEDDKK) is disordered. Residues 160-181 (NNEDGEMIDDGPSDDDEEDDKK) show a composition bias toward acidic residues. Residue serine 172 is modified to Phosphoserine.

This is Ankyrin repeat-containing protein YGL242C from Saccharomyces cerevisiae (strain ATCC 204508 / S288c) (Baker's yeast).